A 209-amino-acid chain; its full sequence is uncharacterized protein (209 aa).

An FCP1 homology domain is found at 1 to 199; the sequence is MQVFLDLDET…DELKRVTASL (199 aa).

This is an uncharacterized protein from Dryophytes versicolor (chameleon treefrog).